The chain runs to 393 residues: Probable acetyl-CoA acyltransferase (393 aa).

Residue Cys-88 is the Acyl-thioester intermediate of the active site. Catalysis depends on proton acceptor residues His-349 and Cys-378.

It belongs to the thiolase-like superfamily. Thiolase family.

The protein resides in the cytoplasm. The enzyme catalyses 2 acetyl-CoA = acetoacetyl-CoA + CoA. In Staphylococcus aureus (strain MSSA476), this protein is Probable acetyl-CoA acyltransferase.